A 444-amino-acid polypeptide reads, in one-letter code: Tubulin gamma chain (444 aa).

A GTP-binding site is contributed by 144–150 (SGGTGSG).

This sequence belongs to the tubulin family.

The protein localises to the cytoplasm. It localises to the cytoskeleton. The protein resides in the microtubule organizing center. Its subcellular location is the centrosome. It is found in the cell junction. The protein localises to the hemidesmosome. It localises to the adherens junction. Tubulin is the major constituent of microtubules. The gamma chain is found at microtubule organizing centers (MTOC) such as the spindle poles or the centrosome, suggesting that it is involved in the minus-end nucleation of microtubule assembly. This chain is Tubulin gamma chain (tbg-1), found in Caenorhabditis elegans.